The following is a 106-amino-acid chain: uncharacterized protein (106 aa).

The first 31 residues, 1-31 (MKKKTKIILSLLAALIVILIVLPVLSPVVFT), serve as a signal peptide directing secretion.

This is an uncharacterized protein from Bacillus subtilis (strain 168).